The chain runs to 455 residues: Peroxisomal membrane protein PEX3 (455 aa).

The span at T113 to G125 shows a compositional bias: polar residues. The interval T113–P135 is disordered. The chain crosses the membrane as a helical span at residues F155–L171.

The protein belongs to the peroxin-3 family. As to quaternary structure, component of the peroxisomal docking complex, composed of at least PEX3, PEX13, PEX14 and PEX17. Component of the peroxisomal translocation complex, composed of at least PEX3, PEX2, PEX10 and PEX12. Interacts with PEX19. Interacts with the pexophagy receptor ATG30.

The protein localises to the peroxisome membrane. In terms of biological role, peroxisomal membrane protein required for peroxisome biosynthesis. Shared component of both the peroxisomal docking complex and the peroxisomal translocation complex. The two types of peroxisomal matrix targeting signals, PTS1 and PTS2, are first recognized in the cytosol by their receptors PEX5 and PEX7, respectively, which then carry the cargo to the peroxisomal membrane. The peroxisomal targeting signal (PTS) receptor-cargo complexes interact with peroxisomal membrane protein (PMP) components of the docking complex. They have then additional downstream interactions with the translocation complex, leading to the transport of fully folded and oligomerized cargo into the peroxisome matrix. PEX3 acts as an anchoring site for PEX19 on the peroxisomal membrane and thus plays a crucial role in the assembly of the peroxisomal translocation complex. Is also essential for the interaction between the two complexes. Finally. PEX3 activates selective autophagy of peroxisomes (pexophagy) via interaction with the pexophagy receptor ATG30. The protein is Peroxisomal membrane protein PEX3 of Komagataella phaffii (strain GS115 / ATCC 20864) (Yeast).